The sequence spans 738 residues: Wall-associated receptor kinase 4 (738 aa).

A signal peptide spans 1–22 (MKVQRLFLVAIFCLSYMQLVKG). Topologically, residues 23–335 (QTLPRCPEKC…PKGNPEYVEW (313 aa)) are extracellular. 7 N-linked (GlcNAc...) asparagine glycosylation sites follow: asparagine 34, asparagine 56, asparagine 109, asparagine 115, asparagine 132, asparagine 182, and asparagine 208. Residues 232–278 (RGETCGQVGEKKCGVNGICSNSASGIGYTCKCKGGFQGNPYLQNGCQ) enclose the EGF-like 1 domain. Intrachain disulfides connect cysteine 236–cysteine 250, cysteine 244–cysteine 261, cysteine 263–cysteine 277, cysteine 283–cysteine 300, cysteine 294–cysteine 309, and cysteine 311–cysteine 324. The region spanning 279 to 325 (DINECTTANPIHKHNCSGDSTCENKLGHFRCNCRSRYELNTTTNTCK) is the EGF-like 2; calcium-binding domain. A glycan (N-linked (GlcNAc...) asparagine) is linked at asparagine 293. N-linked (GlcNAc...) asparagine glycosylation occurs at asparagine 318. A helical transmembrane segment spans residues 336-356 (TTIVLGTTIGFLVILLAISCI). Topologically, residues 357 to 738 (EHKMKNTKDT…VAILDIEAGR (382 aa)) are cytoplasmic. Residue threonine 399 is modified to Phosphothreonine. The 284-residue stretch at 410–693 (YDENRILGQG…RVTKTKHKWS (284 aa)) folds into the Protein kinase domain. Residues 416-424 (LGQGGQGTV) and lysine 438 each bind ATP. Residue tyrosine 483 is modified to Phosphotyrosine. Aspartate 535 functions as the Proton acceptor in the catalytic mechanism. Phosphothreonine is present on residues threonine 569 and threonine 574. Tyrosine 582 is modified (phosphotyrosine).

Belongs to the protein kinase superfamily. Ser/Thr protein kinase family. In terms of tissue distribution, strictly expressed in siliques.

It localises to the membrane. It catalyses the reaction L-seryl-[protein] + ATP = O-phospho-L-seryl-[protein] + ADP + H(+). The catalysed reaction is L-threonyl-[protein] + ATP = O-phospho-L-threonyl-[protein] + ADP + H(+). Its function is as follows. Serine/threonine-protein kinase that may function as a signaling receptor of extracellular matrix component. Binding to pectin may have significance in the control of cell expansion, morphogenesis and development. The protein is Wall-associated receptor kinase 4 (WAK4) of Arabidopsis thaliana (Mouse-ear cress).